The following is an 89-amino-acid chain: Small ribosomal subunit protein uS17 (89 aa).

Belongs to the universal ribosomal protein uS17 family. Part of the 30S ribosomal subunit.

Its function is as follows. One of the primary rRNA binding proteins, it binds specifically to the 5'-end of 16S ribosomal RNA. The protein is Small ribosomal subunit protein uS17 of Delftia acidovorans (strain DSM 14801 / SPH-1).